The sequence spans 277 residues: 3-methyl-2-oxobutanoate hydroxymethyltransferase (277 aa).

Residues Asp42 and Asp81 each contribute to the Mg(2+) site. 3-methyl-2-oxobutanoate contacts are provided by residues 42-43, Asp81, and Lys110; that span reads DS. Position 112 (Glu112) interacts with Mg(2+). Glu179 serves as the catalytic Proton acceptor.

The protein belongs to the PanB family. Homodecamer; pentamer of dimers. Requires Mg(2+) as cofactor.

The protein resides in the cytoplasm. It carries out the reaction 3-methyl-2-oxobutanoate + (6R)-5,10-methylene-5,6,7,8-tetrahydrofolate + H2O = 2-dehydropantoate + (6S)-5,6,7,8-tetrahydrofolate. It functions in the pathway cofactor biosynthesis; (R)-pantothenate biosynthesis; (R)-pantoate from 3-methyl-2-oxobutanoate: step 1/2. Its function is as follows. Catalyzes the reversible reaction in which hydroxymethyl group from 5,10-methylenetetrahydrofolate is transferred onto alpha-ketoisovalerate to form ketopantoate. This Anaplasma marginale (strain Florida) protein is 3-methyl-2-oxobutanoate hydroxymethyltransferase.